We begin with the raw amino-acid sequence, 206 residues long: Ribosomal RNA large subunit methyltransferase E (206 aa).

Gly-60, Trp-62, Asp-80, Asp-96, and Asp-121 together coordinate S-adenosyl-L-methionine. The Proton acceptor role is filled by Lys-161.

It belongs to the class I-like SAM-binding methyltransferase superfamily. RNA methyltransferase RlmE family.

Its subcellular location is the cytoplasm. The enzyme catalyses uridine(2552) in 23S rRNA + S-adenosyl-L-methionine = 2'-O-methyluridine(2552) in 23S rRNA + S-adenosyl-L-homocysteine + H(+). Its function is as follows. Specifically methylates the uridine in position 2552 of 23S rRNA at the 2'-O position of the ribose in the fully assembled 50S ribosomal subunit. This chain is Ribosomal RNA large subunit methyltransferase E, found in Nitrosospira multiformis (strain ATCC 25196 / NCIMB 11849 / C 71).